A 181-amino-acid chain; its full sequence is Urease accessory protein UreE (181 aa).

The interval 143–181 (FDPEPGAYNQAGQGHSHGHSHGHSHNHDHEHSHGHKHAH) is disordered.

The protein belongs to the UreE family.

It is found in the cytoplasm. Involved in urease metallocenter assembly. Binds nickel. Probably functions as a nickel donor during metallocenter assembly. The protein is Urease accessory protein UreE of Marinobacter nauticus (strain ATCC 700491 / DSM 11845 / VT8) (Marinobacter aquaeolei).